A 174-amino-acid polypeptide reads, in one-letter code: uncharacterized protein (174 aa).

Residues 126–146 (AIDEFIITVIPVVLGSGIPLF) traverse the membrane as a helical segment.

It to B.subtilis YyaP.

The protein localises to the membrane. This is an uncharacterized protein from Bacillus subtilis (strain 168).